The primary structure comprises 73 residues: MKQEIHPEYHQATARCACGNEFTVGSTKESIKVEICSQCHPFFTGKQKLVDTAGRIERFRRKYAKFEQQKSGK.

Zn(2+) contacts are provided by cysteine 16, cysteine 18, cysteine 36, and cysteine 39.

This sequence belongs to the bacterial ribosomal protein bL31 family. Type A subfamily. As to quaternary structure, part of the 50S ribosomal subunit. The cofactor is Zn(2+).

Its function is as follows. Binds the 23S rRNA. The protein is Large ribosomal subunit protein bL31 of Desulfosudis oleivorans (strain DSM 6200 / JCM 39069 / Hxd3) (Desulfococcus oleovorans).